Here is a 309-residue protein sequence, read N- to C-terminus: 2-dehydro-3-deoxygluconokinase (309 aa).

Residues 28–32, Y88, 102–104, and R170 each bind substrate; these read GDTLN and YWR. ATP is bound by residues 168 to 170, 228 to 233, and 261 to 264; these read NYR, KRGADS, and AAGD. D264 serves as a coordination point for substrate. D264 acts as the Proton acceptor in catalysis.

This sequence belongs to the carbohydrate kinase PfkB family.

The enzyme catalyses 2-dehydro-3-deoxy-D-gluconate + ATP = 2-dehydro-3-deoxy-6-phospho-D-gluconate + ADP + H(+). Its pathway is carbohydrate acid metabolism; 2-dehydro-3-deoxy-D-gluconate degradation; D-glyceraldehyde 3-phosphate and pyruvate from 2-dehydro-3-deoxy-D-gluconate: step 1/2. Functionally, catalyzes the phosphorylation of 2-keto-3-deoxygluconate (KDG) to produce 2-keto-3-deoxy-6-phosphogluconate (KDPG). The protein is 2-dehydro-3-deoxygluconokinase (kdgK) of Escherichia coli (strain K12).